We begin with the raw amino-acid sequence, 144 residues long: MSIRERLLATVSQYIAAYNEFDPSAMKTVRTPTCLSHGIAPTCKFTQSVEEHTRHMMLSRGVFRSVNASIVDDDTTVVDEVSRHVVVKVKIRCETTVGPYENEAIFIMAMDEEGALVDGIFQFLDTARFQQFQGRLDEAQESKN.

This sequence belongs to the trt14 isomerase family. Homodimer.

Its pathway is secondary metabolite biosynthesis; terpenoid biosynthesis. Part of the gene cluster B that mediates the biosynthesis of the fungal meroterpenoid acetoxydehydroaustin. The first step of the pathway is the synthesis of 3,5-dimethylorsellinic acid by the polyketide synthase ausA. 3,5-dimethylorsellinic acid is then prenylated by the polyprenyl transferase ausN. Further epoxidation by the FAD-dependent monooxygenase ausM and cyclization by the probable terpene cyclase ausL lead to the formation of protoaustinoid A. Protoaustinoid A is then oxidized to spiro-lactone preaustinoid A3 by the combined action of the FAD-binding monooxygenases ausB and ausC, and the dioxygenase ausE. Acid-catalyzed keto-rearrangement and ring contraction of the tetraketide portion of preaustinoid A3 by ausJ lead to the formation of preaustinoid A4. The aldo-keto reductase ausK, with the help of ausH, is involved in the next step by transforming preaustinoid A4 into isoaustinone which is in turn hydroxylated by the P450 monooxygenase ausI to form austinolide. The cytochrome P450 monooxygenase ausG then modifies austinolide to austinol. Austinol is further acetylated to austin by the O-acetyltransferase ausP, which spontaneously changes to dehydroaustin. The cytochrome P450 monooxygenase then converts dehydroaustin is into 7-dehydrodehydroaustin. The hydroxylation catalyzed by ausR permits the second O-acetyltransferase ausQ to add an additional acetyl group to the molecule, leading to the formation of acetoxydehydroaustin. Due to genetic rearrangements of the clusters and the subsequent loss of some enzymes, the end product of the Penicillium brasilianum austinoid biosynthesis clusters is acetoxydehydroaustin. AusS is necessary for austinoids production and may play a possible function as a regulator. In Penicillium brasilianum, this protein is Austinoid biosynthesis clusters protein S.